An 88-amino-acid polypeptide reads, in one-letter code: Transcription factor ILI5 (88 aa).

The bHLH domain maps to 1–54; that stretch reads MSSRRSSRGSISEEEINELISKLQSLLPNSRRRGSSQASTTKLLKETCNYIKSL.

This sequence belongs to the bHLH protein family. In terms of assembly, interacts with APG.

Its subcellular location is the nucleus. Its function is as follows. Atypical and probable non DNA-binding bHLH transcription factor that acts as a positive regulator of grain size. Binds the transcription repressor APG and forms a heterodimer of antagonistic basic helix-loop-helix transcription factors that regulates grain length and weight by controlling cell elongation in lemma and palea. The protein is Transcription factor ILI5 (ILI5) of Oryza sativa subsp. indica (Rice).